The chain runs to 446 residues: tRNA modification GTPase MnmE (446 aa).

(6S)-5-formyl-5,6,7,8-tetrahydrofolate is bound by residues Arg-24, Glu-81, and Lys-120. Positions 216-368 constitute a TrmE-type G domain; it reads GLHAVLIGPP…LHIRLRELAL (153 aa). Residue Asn-226 participates in K(+) binding. GTP contacts are provided by residues 226-231, 245-251, and 270-273; these read NAGKSS, TDVAGTT, and DTAG. Ser-230 contacts Mg(2+). Positions 245, 247, and 250 each coordinate K(+). Thr-251 lines the Mg(2+) pocket. Position 446 (Lys-446) interacts with (6S)-5-formyl-5,6,7,8-tetrahydrofolate.

Belongs to the TRAFAC class TrmE-Era-EngA-EngB-Septin-like GTPase superfamily. TrmE GTPase family. As to quaternary structure, homodimer. Heterotetramer of two MnmE and two MnmG subunits. K(+) serves as cofactor.

Its subcellular location is the cytoplasm. In terms of biological role, exhibits a very high intrinsic GTPase hydrolysis rate. Involved in the addition of a carboxymethylaminomethyl (cmnm) group at the wobble position (U34) of certain tRNAs, forming tRNA-cmnm(5)s(2)U34. This Xanthomonas oryzae pv. oryzae (strain KACC10331 / KXO85) protein is tRNA modification GTPase MnmE.